Here is a 297-residue protein sequence, read N- to C-terminus: Phosphoribosylaminoimidazole-succinocarboxamide synthase (297 aa).

It belongs to the SAICAR synthetase family.

The enzyme catalyses 5-amino-1-(5-phospho-D-ribosyl)imidazole-4-carboxylate + L-aspartate + ATP = (2S)-2-[5-amino-1-(5-phospho-beta-D-ribosyl)imidazole-4-carboxamido]succinate + ADP + phosphate + 2 H(+). The protein operates within purine metabolism; IMP biosynthesis via de novo pathway; 5-amino-1-(5-phospho-D-ribosyl)imidazole-4-carboxamide from 5-amino-1-(5-phospho-D-ribosyl)imidazole-4-carboxylate: step 1/2. This chain is Phosphoribosylaminoimidazole-succinocarboxamide synthase, found in Mycobacterium tuberculosis (strain ATCC 25177 / H37Ra).